A 254-amino-acid polypeptide reads, in one-letter code: MAREENVYMAKLAEQAERYEEMVQFMEKVSTSLGSEELTVEERNLLSVAYKNVIGARRASWRIISSIEQKEESRGNEEHVKCIKEYRSKIESELSDICDGILKLLDSNLIPSASNGDSKVFYLKMKGDYHRYLAEFKTGAERKEAAESTLSAYKAAQDIANTELAPTHPIRLGLALNFSVFYYEILNSPDRACNLAKQAFDEAIAELDTLGEESYKDSTLIMQLLRDNLTLWTSDMQDDGADEIKETKNDNEQQ.

The protein belongs to the 14-3-3 family. In terms of assembly, homodimer.

The polypeptide is 14-3-3 protein 2 (TFT2) (Solanum lycopersicum (Tomato)).